A 333-amino-acid chain; its full sequence is DNA-directed RNA polymerase subunit alpha (333 aa).

Residues 1–239 (MSAVLDKGSL…TQARCFLNIA (239 aa)) are alpha N-terminal domain (alpha-NTD). The segment at 259 to 333 (DASDLLSARI…SLGMNLDSHG (75 aa)) is alpha C-terminal domain (alpha-CTD).

It belongs to the RNA polymerase alpha chain family. Homodimer. The RNAP catalytic core consists of 2 alpha, 1 beta, 1 beta' and 1 omega subunit. When a sigma factor is associated with the core the holoenzyme is formed, which can initiate transcription.

The enzyme catalyses RNA(n) + a ribonucleoside 5'-triphosphate = RNA(n+1) + diphosphate. DNA-dependent RNA polymerase catalyzes the transcription of DNA into RNA using the four ribonucleoside triphosphates as substrates. In Neorickettsia sennetsu (strain ATCC VR-367 / Miyayama) (Ehrlichia sennetsu), this protein is DNA-directed RNA polymerase subunit alpha.